Consider the following 156-residue polypeptide: Small ribosomal subunit protein uS7 (156 aa).

This sequence belongs to the universal ribosomal protein uS7 family. In terms of assembly, part of the 30S ribosomal subunit. Contacts proteins S9 and S11.

Its function is as follows. One of the primary rRNA binding proteins, it binds directly to 16S rRNA where it nucleates assembly of the head domain of the 30S subunit. Is located at the subunit interface close to the decoding center, probably blocks exit of the E-site tRNA. The sequence is that of Small ribosomal subunit protein uS7 from Clostridium botulinum (strain Kyoto / Type A2).